The primary structure comprises 446 residues: Tubulin beta chain (446 aa).

GTP-binding residues include Q11, E69, S138, G142, T143, G144, N204, and N226. Mg(2+) is bound at residue E69. The tract at residues 426–446 (QDATAEEEGEYVEDEDEMDGM) is disordered. Residues 429-446 (TAEEEGEYVEDEDEMDGM) are compositionally biased toward acidic residues.

Belongs to the tubulin family. In terms of assembly, dimer of alpha and beta chains. A typical microtubule is a hollow water-filled tube with an outer diameter of 25 nm and an inner diameter of 15 nM. Alpha-beta heterodimers associate head-to-tail to form protofilaments running lengthwise along the microtubule wall with the beta-tubulin subunit facing the microtubule plus end conferring a structural polarity. Microtubules usually have 13 protofilaments but different protofilament numbers can be found in some organisms and specialized cells. Requires Mg(2+) as cofactor.

The protein resides in the cytoplasm. Its subcellular location is the cytoskeleton. In terms of biological role, tubulin is the major constituent of microtubules, a cylinder consisting of laterally associated linear protofilaments composed of alpha- and beta-tubulin heterodimers. Microtubules grow by the addition of GTP-tubulin dimers to the microtubule end, where a stabilizing cap forms. Below the cap, tubulin dimers are in GDP-bound state, owing to GTPase activity of alpha-tubulin. The protein is Tubulin beta chain of Euplotes crassus.